The primary structure comprises 256 residues: Undecaprenyl-diphosphatase 2 (256 aa).

8 consecutive transmembrane segments (helical) span residues 1–21, 38–58, 70–90, 97–117, 134–154, 175–195, 208–228, and 236–256; these read MDIF…FLPI, ATAT…LAVL, LNLW…AFIF, LFNV…FLLL, VTYK…IPGT, AEFS…YDLL, ALAV…KLFI, and FVSF…IAYV.

This sequence belongs to the UppP family.

It is found in the cell inner membrane. It catalyses the reaction di-trans,octa-cis-undecaprenyl diphosphate + H2O = di-trans,octa-cis-undecaprenyl phosphate + phosphate + H(+). Catalyzes the dephosphorylation of undecaprenyl diphosphate (UPP). Confers resistance to bacitracin. In Pseudoalteromonas translucida (strain TAC 125), this protein is Undecaprenyl-diphosphatase 2.